The following is a 236-amino-acid chain: Small ribosomal subunit protein uS2c (236 aa).

It belongs to the universal ribosomal protein uS2 family.

The protein localises to the plastid. It localises to the chloroplast. The polypeptide is Small ribosomal subunit protein uS2c (rps2) (Coffea arabica (Arabian coffee)).